The primary structure comprises 431 residues: Ribosomal RNA small subunit methyltransferase B (431 aa).

S-adenosyl-L-methionine is bound by residues Cys-254 to Lys-260, Asp-277, Asp-303, and Asp-322. Cys-375 functions as the Nucleophile in the catalytic mechanism.

It belongs to the class I-like SAM-binding methyltransferase superfamily. RsmB/NOP family.

It localises to the cytoplasm. The enzyme catalyses cytidine(967) in 16S rRNA + S-adenosyl-L-methionine = 5-methylcytidine(967) in 16S rRNA + S-adenosyl-L-homocysteine + H(+). Functionally, specifically methylates the cytosine at position 967 (m5C967) of 16S rRNA. In Klebsiella pneumoniae subsp. pneumoniae (strain ATCC 700721 / MGH 78578), this protein is Ribosomal RNA small subunit methyltransferase B.